The chain runs to 318 residues: Transaldolase (318 aa).

Lys132 serves as the catalytic Schiff-base intermediate with substrate.

It belongs to the transaldolase family. Type 1 subfamily. Homodimer.

It is found in the cytoplasm. The catalysed reaction is D-sedoheptulose 7-phosphate + D-glyceraldehyde 3-phosphate = D-erythrose 4-phosphate + beta-D-fructose 6-phosphate. The protein operates within carbohydrate degradation; pentose phosphate pathway; D-glyceraldehyde 3-phosphate and beta-D-fructose 6-phosphate from D-ribose 5-phosphate and D-xylulose 5-phosphate (non-oxidative stage): step 2/3. In terms of biological role, transaldolase is important for the balance of metabolites in the pentose-phosphate pathway. The protein is Transaldolase of Hamiltonella defensa subsp. Acyrthosiphon pisum (strain 5AT).